The following is a 575-amino-acid chain: Hemagglutinin-neuraminidase (575 aa).

The span at 1-10 (MDGDRGKRDS) shows a compositional bias: basic and acidic residues. Positions 1 to 24 (MDGDRGKRDSYWSTSPSGSTTKLA) are disordered. Over 1–37 (MDGDRGKRDSYWSTSPSGSTTKLASGWERSSKVDTWL) the chain is Intravirion. Residues 10–14 (SYWST) are incorporation in virion. Residues 11–23 (YWSTSPSGSTTKL) show a composition bias toward polar residues. A helical transmembrane segment spans residues 38–58 (LILSFTQWALSIATVIICIII). The segment at 59–140 (SARQGYSMKE…RQELTQLCES (82 aa)) is involved in interaction with F protein. The Virion surface segment spans residues 59–575 (SARQGYSMKE…SIPKLCKAES (517 aa)). N-linked (GlcNAc...) asparagine; by host glycosylation is present at Asn77. Disulfide bonds link Cys192/Cys216, Cys258/Cys271, Cys357/Cys469, and Cys463/Cys473. The tract at residues 254-259 (NRKSCS) is involved in neuraminidase activity. Residues Asn499 and Asn511 are each glycosylated (N-linked (GlcNAc...) asparagine; by host). Cys535 and Cys544 are joined by a disulfide.

Belongs to the paramyxoviruses hemagglutinin-neuraminidase family. Homotetramer; composed of disulfide-linked homodimers. Interacts with F protein trimer. In terms of processing, N-glycosylated; glycans consist of a mixture of high mannose-type oligosaccharides and of complex-type oligosaccharides.

Its subcellular location is the virion membrane. It localises to the host cell membrane. It carries out the reaction Hydrolysis of alpha-(2-&gt;3)-, alpha-(2-&gt;6)-, alpha-(2-&gt;8)- glycosidic linkages of terminal sialic acid residues in oligosaccharides, glycoproteins, glycolipids, colominic acid and synthetic substrates.. Its function is as follows. Attaches the virus to sialic acid-containing cell receptors and thereby initiating infection. Binding of HN protein to the receptor induces a conformational change that allows the F protein to trigger virion/cell membranes fusion. In terms of biological role, neuraminidase activity ensures the efficient spread of the virus by dissociating the mature virions from the neuraminic acid containing glycoproteins. This is Hemagglutinin-neuraminidase (HN) from Sendai virus (strain Fushimi) (SeV).